A 236-amino-acid polypeptide reads, in one-letter code: Factor V activator RVV-V alpha (236 aa).

One can recognise a Peptidase S1 domain in the interval 1 to 227; it reads VVGGDECNIN…YNNWIQNIIA (227 aa). Disulfide bonds link C7/C141, C28/C44, C76/C234, C120/C188, C152/C167, and C178/C203. Catalysis depends on charge relay system residues H43 and D88. The Charge relay system role is filled by S182. N-linked (GlcNAc...) asparagine glycosylation occurs at N229.

It belongs to the peptidase S1 family. Snake venom subfamily. Monomer. In terms of tissue distribution, expressed by the venom gland.

The protein resides in the secreted. It carries out the reaction Fully activates human clotting factor V by a single cleavage at the 1545-Trp-Tyr-Leu-Arg-|-Ser-Asn-Asn-Gly-1552 bond. Cattle, but not rabbit, factor V is cleaved, and no other proteins of the clotting system are attacked. Esterase activity is observed on Bz-Arg-OEt and Tos-Arg-OMe, and amidase activity on Phe-pipecolyl-Arg-NHPhNO2.. With respect to regulation, inhibited by D-Phe-Pro-Arg-chloromethyl ketone (FPRCK) (97%), PMSF (76%), and benzamidine (50%). Is not inhibited by BPTI, antithrombin and EDTA. Functionally, venom serine protease that activates factor V (F5) in a calcium-independent manner. It cleaves the Arg(1545)-Ser(1546) linkage in the human factor V molecule. Induces the coagulation of mammalian plasma. The polypeptide is Factor V activator RVV-V alpha (Daboia siamensis (Eastern Russel's viper)).